The chain runs to 396 residues: UDP-galactose translocator (396 aa).

A run of 10 helical transmembrane segments spans residues 3–23, 37–57, 65–85, 97–117, 140–160, 169–189, 200–220, 238–258, 269–289, and 315–335; these read AVGA…AGAL, YISL…IRYA, FFAT…CLLL, LVLF…KLAV, TFQV…VLML, WASL…QAGG, GAGL…GVYF, LGLF…GTAV, PAVW…AVVV, and LFGF…IGAV. The interval 358–379 is disordered; sequence PCVHQQPPGQPPPPQLSSHRGD. Residues 392–396 carry the ER retention motif motif; sequence KVKGS.

It belongs to the nucleotide-sugar transporter family. SLC35A subfamily. As to quaternary structure, interacts with SLC35A3; the interaction is reduced in the presence of SLC35A4. Found in a complex with SLC35A3 and SLC35A4. Interacts with B4GALT4.

Its subcellular location is the endoplasmic reticulum membrane. The protein localises to the golgi apparatus membrane. It carries out the reaction UMP(out) + UDP-alpha-D-galactose(in) = UMP(in) + UDP-alpha-D-galactose(out). The catalysed reaction is UDP-N-acetyl-alpha-D-galactosamine(in) + UMP(out) = UDP-N-acetyl-alpha-D-galactosamine(out) + UMP(in). It catalyses the reaction UMP(out) + UDP-alpha-D-glucose(in) = UMP(in) + UDP-alpha-D-glucose(out). The enzyme catalyses UMP(out) + UDP-N-acetyl-alpha-D-glucosamine(in) = UMP(in) + UDP-N-acetyl-alpha-D-glucosamine(out). It carries out the reaction UDP-alpha-D-galactose(in) + AMP(out) = UDP-alpha-D-galactose(out) + AMP(in). The catalysed reaction is UDP-alpha-D-galactose(in) + CMP(out) = UDP-alpha-D-galactose(out) + CMP(in). It catalyses the reaction UDP-N-acetyl-alpha-D-galactosamine(out) + UDP-alpha-D-galactose(in) = UDP-N-acetyl-alpha-D-galactosamine(in) + UDP-alpha-D-galactose(out). The enzyme catalyses UDP-N-acetyl-alpha-D-glucosamine(out) + UDP-alpha-D-galactose(in) = UDP-N-acetyl-alpha-D-glucosamine(in) + UDP-alpha-D-galactose(out). It carries out the reaction UDP-alpha-D-galactose(in) + UDP-alpha-D-glucose(out) = UDP-alpha-D-galactose(out) + UDP-alpha-D-glucose(in). The catalysed reaction is UMP(out) + CMP(in) = UMP(in) + CMP(out). It catalyses the reaction UMP(out) + AMP(in) = UMP(in) + AMP(out). In terms of biological role, transports uridine diphosphate galactose (UDP-galactose) from the cytosol into the Golgi apparatus, functioning as an antiporter that exchanges UDP-galactose for UMP. It is also able to exchange UDP-galactose for AMP and CMP, and to transport UDP-N-acetylgalactosamine (UDP-GalNAc) and other nucleotide sugars. As a provider of UDP-galactose to galactosyltransferases present in the Golgi apparatus, it is necessary for globotriaosylceramide/globoside (Gb3Cer) synthesis from lactosylceramide. In Homo sapiens (Human), this protein is UDP-galactose translocator.